The chain runs to 678 residues: ERAD-associated E3 ubiquitin-protein ligase component HRD3A (678 aa).

The signal sequence occupies residues 1–25 (MRILSYGIVILSLLVFSFIEFGVHA). A disordered region spans residues 40–71 (GGDDNGVGESSDFDEFGESEPKSEEELDPGSW). 8 Sel1-like repeats span residues 124–159 (PHAQ…AGGN), 242–277 (ANAM…VDKG), 279–313 (PRSM…AKEG), 317–349 (AFNG…AVDN), 353–386 (SGHY…ANAG), 388–422 (PKAF…AERG), 506–537 (AALL…AKSQ), and 540–568 (AQAM…RYYD). Asn-298 and Asn-335 each carry an N-linked (GlcNAc...) asparagine glycan. The chain crosses the membrane as a helical span at residues 620–640 (VVFEEGNATILTLFVCLITIL).

The protein belongs to the sel-1 family. In terms of assembly, interacts with OS9.

Its subcellular location is the endoplasmic reticulum membrane. Component of the endoplasmic reticulum (ER) quality control system called ER-associated degradation (ERAD) and involved in ubiquitin-dependent degradation of misfolded endoplasmic reticulum proteins. Functions as an ERAD substrate-recruiting factor that recognizes misfolded proteins for the HRD1 E3 ubiquitin ligase complex. Targets the misfolded LRR receptor kinase BRI1. The chain is ERAD-associated E3 ubiquitin-protein ligase component HRD3A from Arabidopsis thaliana (Mouse-ear cress).